Reading from the N-terminus, the 637-residue chain is Formate--tetrahydrofolate ligase (637 aa).

81-88 (TPLGEGKS) is an ATP binding site.

The protein belongs to the formate--tetrahydrofolate ligase family. In terms of assembly, homodimer.

The enzyme catalyses (6S)-5,6,7,8-tetrahydrofolate + formate + ATP = (6R)-10-formyltetrahydrofolate + ADP + phosphate. It functions in the pathway one-carbon metabolism; tetrahydrofolate interconversion. This Spinacia oleracea (Spinach) protein is Formate--tetrahydrofolate ligase.